An 831-amino-acid polypeptide reads, in one-letter code: Thymine dioxygenase JBP1-B (831 aa).

The thymine dioxygenase stretch occupies residues 80 to 282 (VVGGVLLPGA…RLTCVCYYRA (203 aa)). Fe cation is bound by residues histidine 207, aspartate 209, and histidine 257. Arginine 273 is a 2-oxoglutarate binding site. The DNA-binding JBP1 domain stretch occupies residues 409 to 578 (LGGALKAAEE…IEEARRRGNA (170 aa)).

This sequence belongs to the TET family. JBP1 subfamily. Monomer. Binds to DNA as a monomer. Requires Fe(2+) as cofactor.

Its subcellular location is the nucleus. It catalyses the reaction thymine + 2-oxoglutarate + O2 = 5-hydroxymethyluracil + succinate + CO2. Functionally, dioxygenase that catalyzes the first step of DNA base J (beta-d-glucosyl-HOMedU) biosynthesis by converting thymine to 5-hydroxymethyluracil (HOMedU). DNA base J is a hypermodified thymidine residue found in the genome of kinetoplastid parasites, which is localized primarily to repetitive DNA, namely the telomeres, and is implicated in the regulation of antigenic variation. Also specifically binds to base J-containing DNA (J-DNA). Involved in propagation and maintenance of DNA base J synthesis initiated by JBP2 by specifically binding already synthesized DNA base J and propagating J synthesis. Thymine dioxygenase activity and J-DNA-binding are independent functions. This Trypanosoma cruzi (strain CL Brener) protein is Thymine dioxygenase JBP1-B (JBP1B).